A 436-amino-acid chain; its full sequence is Magnesium transporter MRS2-4 (436 aa).

Residues 1–56 (MGKGPLSFRRLSSIRHRKKGSAVKDDSAQTSTPSSPPPPLPIHAGGSAVGATGKAK) form a disordered region. A compositionally biased stretch (basic residues) spans 12–21 (SSIRHRKKGS). Over residues 44–53 (AGGSAVGATG) the composition is skewed to low complexity. The next 2 helical transmembrane spans lie at 372–392 (LTLTIASFAIAAETLLASLFG) and 405–425 (VFGYFVWSVTALCIVLFMVTL). The Required for magnesium transport activity motif lies at 392-394 (GMN).

The protein belongs to the CorA metal ion transporter (MIT) (TC 1.A.35.5) family. In terms of tissue distribution, expressed in the whole plant except roots.

It localises to the membrane. Its function is as follows. Magnesium transporter that may mediate the influx of magnesium. The chain is Magnesium transporter MRS2-4 (MRS2-4) from Arabidopsis thaliana (Mouse-ear cress).